Reading from the N-terminus, the 393-residue chain is Acetylornithine aminotransferase (393 aa).

Residues 96–97 (GT) and Phe129 contribute to the pyridoxal 5'-phosphate site. Residue Arg132 participates in N(2)-acetyl-L-ornithine binding. 214-217 (DEVQ) provides a ligand contact to pyridoxal 5'-phosphate. Lys243 is subject to N6-(pyridoxal phosphate)lysine. Position 271 (Ser271) interacts with N(2)-acetyl-L-ornithine. Residue Thr272 participates in pyridoxal 5'-phosphate binding.

This sequence belongs to the class-III pyridoxal-phosphate-dependent aminotransferase family. ArgD subfamily. In terms of assembly, homodimer. It depends on pyridoxal 5'-phosphate as a cofactor.

It is found in the cytoplasm. It carries out the reaction N(2)-acetyl-L-ornithine + 2-oxoglutarate = N-acetyl-L-glutamate 5-semialdehyde + L-glutamate. It participates in amino-acid biosynthesis; L-arginine biosynthesis; N(2)-acetyl-L-ornithine from L-glutamate: step 4/4. The polypeptide is Acetylornithine aminotransferase (Rhodobacter capsulatus (strain ATCC BAA-309 / NBRC 16581 / SB1003)).